A 76-amino-acid chain; its full sequence is Acyl carrier protein (76 aa).

The 76-residue stretch at 1–76 (MSVEEKVKKI…DAIDYVSNKQ (76 aa)) folds into the Carrier domain. Position 36 is an O-(pantetheine 4'-phosphoryl)serine (serine 36).

The protein belongs to the acyl carrier protein (ACP) family. In terms of processing, 4'-phosphopantetheine is transferred from CoA to a specific serine of apo-ACP by AcpS. This modification is essential for activity because fatty acids are bound in thioester linkage to the sulfhydryl of the prosthetic group.

It is found in the cytoplasm. It participates in lipid metabolism; fatty acid biosynthesis. Functionally, carrier of the growing fatty acid chain in fatty acid biosynthesis. This Nitratidesulfovibrio vulgaris (strain ATCC 29579 / DSM 644 / CCUG 34227 / NCIMB 8303 / VKM B-1760 / Hildenborough) (Desulfovibrio vulgaris) protein is Acyl carrier protein.